The sequence spans 185 residues: Sulfopyruvate decarboxylase subunit beta (185 aa).

Belongs to the TPP enzyme family. In terms of assembly, heterododecamer composed of 6 subunits alpha and 6 subunits beta. It depends on thiamine diphosphate as a cofactor.

The enzyme catalyses 3-sulfopyruvate + H(+) = sulfoacetaldehyde + CO2. Its pathway is cofactor biosynthesis; coenzyme M biosynthesis; sulfoacetaldehyde from phosphoenolpyruvate and sulfite: step 4/4. Functionally, involved in the biosynthesis of the coenzyme M (2-mercaptoethanesulfonic acid). Catalyzes the decarboxylation of sulfopyruvate to sulfoacetaldehyde. The sequence is that of Sulfopyruvate decarboxylase subunit beta from Methanococcus maripaludis (strain DSM 14266 / JCM 13030 / NBRC 101832 / S2 / LL).